The following is a 233-amino-acid chain: Large ribosomal subunit protein uL22m (233 aa).

Belongs to the universal ribosomal protein uL22 family. In terms of assembly, component of the mitochondrial ribosome large subunit (39S) which comprises a 16S rRNA and about 50 distinct proteins.

Its subcellular location is the mitochondrion. The protein is Large ribosomal subunit protein uL22m (mRpL22) of Drosophila melanogaster (Fruit fly).